The chain runs to 385 residues: Arginine biosynthesis bifunctional protein ArgJ (385 aa).

The substrate site is built by T142, K168, T179, E259, N380, and T385. Catalysis depends on T179, which acts as the Nucleophile.

It belongs to the ArgJ family. Heterotetramer of two alpha and two beta chains.

It localises to the cytoplasm. It carries out the reaction N(2)-acetyl-L-ornithine + L-glutamate = N-acetyl-L-glutamate + L-ornithine. The enzyme catalyses L-glutamate + acetyl-CoA = N-acetyl-L-glutamate + CoA + H(+). It participates in amino-acid biosynthesis; L-arginine biosynthesis; L-ornithine and N-acetyl-L-glutamate from L-glutamate and N(2)-acetyl-L-ornithine (cyclic): step 1/1. Its pathway is amino-acid biosynthesis; L-arginine biosynthesis; N(2)-acetyl-L-ornithine from L-glutamate: step 1/4. Its function is as follows. Catalyzes two activities which are involved in the cyclic version of arginine biosynthesis: the synthesis of N-acetylglutamate from glutamate and acetyl-CoA as the acetyl donor, and of ornithine by transacetylation between N(2)-acetylornithine and glutamate. The polypeptide is Arginine biosynthesis bifunctional protein ArgJ (Leptospira interrogans serogroup Icterohaemorrhagiae serovar Lai (strain 56601)).